The primary structure comprises 424 residues: L-glutamine:2-deoxy-scyllo-inosose aminotransferase (424 aa).

The residue at position 202 (lysine 202) is an N6-(pyridoxal phosphate)lysine.

It belongs to the DegT/DnrJ/EryC1 family. L-glutamine:2-deoxy-scyllo-inosose/scyllo-inosose aminotransferase subfamily. The cofactor is pyridoxal 5'-phosphate.

It carries out the reaction 2-deoxy-L-scyllo-inosose + L-glutamine = 2-deoxy-scyllo-inosamine + 2-oxoglutaramate. The enzyme catalyses 3-amino-2,3-dideoxy-scyllo-inosose + L-glutamine = 2-deoxystreptamine + 2-oxoglutaramate. It functions in the pathway metabolic intermediate biosynthesis; 2-deoxystreptamine biosynthesis; 2-deoxystreptamine from D-glucose 6-phosphate: step 2/4. The protein operates within metabolic intermediate biosynthesis; 2-deoxystreptamine biosynthesis; 2-deoxystreptamine from D-glucose 6-phosphate: step 4/4. Its pathway is antibiotic biosynthesis; neomycin biosynthesis. Its function is as follows. Catalyzes the PLP-dependent transamination of 2-deoxy-scyllo-inosose (2-DOI) to form 2-deoxy-scyllo-inosamine (2-DOIA) using L-glutamine as the amino donor. Also catalyzes the transamination of 3-amino-2,3-dideoxy-scyllo-inosose (keto-2-DOIA) into 2-deoxystreptamine (2-DOS). The polypeptide is L-glutamine:2-deoxy-scyllo-inosose aminotransferase (neoB) (Streptomyces fradiae (Streptomyces roseoflavus)).